Consider the following 448-residue polypeptide: Adenylosuccinate synthetase (448 aa).

GTP is bound by residues 36–42 (GDEGKGK) and 64–66 (GHT). The active-site Proton acceptor is Asp37. 2 residues coordinate Mg(2+): Asp37 and Gly64. IMP-binding positions include 37-40 (DEGK), 62-65 (NAGH), Thr154, Arg168, Asn246, Thr261, and Arg325. Residue His65 is the Proton donor of the active site. 321 to 327 (VTTKRKR) is a binding site for substrate. Residues Arg327, 353-355 (KLD), and 436-438 (GVG) contribute to the GTP site.

The protein belongs to the adenylosuccinate synthetase family. In terms of assembly, homodimer. It depends on Mg(2+) as a cofactor.

It localises to the cytoplasm. The enzyme catalyses IMP + L-aspartate + GTP = N(6)-(1,2-dicarboxyethyl)-AMP + GDP + phosphate + 2 H(+). It participates in purine metabolism; AMP biosynthesis via de novo pathway; AMP from IMP: step 1/2. Its function is as follows. Plays an important role in the de novo pathway and in the salvage pathway of purine nucleotide biosynthesis. Catalyzes the first committed step in the biosynthesis of AMP from IMP. In Drosophila pseudoobscura pseudoobscura (Fruit fly), this protein is Adenylosuccinate synthetase.